A 196-amino-acid polypeptide reads, in one-letter code: ATP-dependent Clp protease proteolytic subunit (196 aa).

Residue serine 96 is the Nucleophile of the active site. Histidine 121 is a catalytic residue.

Belongs to the peptidase S14 family. As to quaternary structure, fourteen ClpP subunits assemble into 2 heptameric rings which stack back to back to give a disk-like structure with a central cavity, resembling the structure of eukaryotic proteasomes.

The protein resides in the cytoplasm. The catalysed reaction is Hydrolysis of proteins to small peptides in the presence of ATP and magnesium. alpha-casein is the usual test substrate. In the absence of ATP, only oligopeptides shorter than five residues are hydrolyzed (such as succinyl-Leu-Tyr-|-NHMec, and Leu-Tyr-Leu-|-Tyr-Trp, in which cleavage of the -Tyr-|-Leu- and -Tyr-|-Trp bonds also occurs).. Its function is as follows. Cleaves peptides in various proteins in a process that requires ATP hydrolysis. Has a chymotrypsin-like activity. Plays a major role in the degradation of misfolded proteins. The protein is ATP-dependent Clp protease proteolytic subunit of Streptococcus gordonii (strain Challis / ATCC 35105 / BCRC 15272 / CH1 / DL1 / V288).